We begin with the raw amino-acid sequence, 308 residues long: Glycerol-3-phosphate dehydrogenase [NAD(P)+] (308 aa).

Positions 15, 35, 36, and 83 each coordinate NADPH. Sn-glycerol 3-phosphate is bound by residues K83 and G111. An NADPH-binding site is contributed by S115. Positions 166, 219, 229, 230, and 231 each coordinate sn-glycerol 3-phosphate. K166 (proton acceptor) is an active-site residue. Residue R230 coordinates NADPH. E256 contacts NADPH.

The protein belongs to the NAD-dependent glycerol-3-phosphate dehydrogenase family.

The protein resides in the cytoplasm. The catalysed reaction is sn-glycerol 3-phosphate + NAD(+) = dihydroxyacetone phosphate + NADH + H(+). It carries out the reaction sn-glycerol 3-phosphate + NADP(+) = dihydroxyacetone phosphate + NADPH + H(+). Its pathway is membrane lipid metabolism; glycerophospholipid metabolism. Functionally, catalyzes the reduction of the glycolytic intermediate dihydroxyacetone phosphate (DHAP) to sn-glycerol 3-phosphate (G3P), the key precursor for phospholipid synthesis. The sequence is that of Glycerol-3-phosphate dehydrogenase [NAD(P)+] from Synechococcus elongatus (strain ATCC 33912 / PCC 7942 / FACHB-805) (Anacystis nidulans R2).